A 235-amino-acid polypeptide reads, in one-letter code: Ribonuclease 3 (235 aa).

Residues 8-137 (PAELARRIGI…VIGAIFLSGG (130 aa)) form the RNase III domain. Position 50 (Glu50) interacts with Mg(2+). Asp54 is an active-site residue. Mg(2+) contacts are provided by Asp123 and Glu126. Residue Glu126 is part of the active site. The DRBM domain occupies 163-232 (DNKTAFQEWV…AGRAMREWAG (70 aa)). A disordered region spans residues 211–235 (QGRTKKEAEQQAAGRAMREWAGRKG). A compositionally biased stretch (basic and acidic residues) spans 226 to 235 (AMREWAGRKG).

Belongs to the ribonuclease III family. As to quaternary structure, homodimer. Requires Mg(2+) as cofactor.

Its subcellular location is the cytoplasm. The catalysed reaction is Endonucleolytic cleavage to 5'-phosphomonoester.. Digests double-stranded RNA. Involved in the processing of primary rRNA transcript to yield the immediate precursors to the large and small rRNAs (23S and 16S). Processes some mRNAs, and tRNAs when they are encoded in the rRNA operon. Processes pre-crRNA and tracrRNA of type II CRISPR loci if present in the organism. The sequence is that of Ribonuclease 3 from Heliobacterium modesticaldum (strain ATCC 51547 / Ice1).